Here is a 318-residue protein sequence, read N- to C-terminus: Beta-sarcoglycan (318 aa).

The segment at 1–32 is disordered; sequence MAAAAAAAAEQQSSNGPVKKSMREKAVERRNV. Topologically, residues 1-65 are cytoplasmic; the sequence is MAAAAAAAAE…GLRGRKGNLA (65 aa). Positions 21-32 are enriched in basic and acidic residues; that stretch reads SMREKAVERRNV. The chain crosses the membrane as a helical; Signal-anchor for type II membrane protein span at residues 66–86; that stretch reads ICVIVLLFLLAVINLIITLVI. The Extracellular portion of the chain corresponds to 87–318; sequence WAVIRIGPNG…VSDNPCGNTH (232 aa). N-linked (GlcNAc...) asparagine glycosylation is found at N158, N211, and N258. 2 disulfide bridges follow: C288-C314 and C290-C307.

The protein belongs to the sarcoglycan beta/delta/gamma/zeta family. Cross-link to form 2 major subcomplexes: one consisting of SGCB, SGCD and SGCG and the other consisting of SGCB and SGCD. The association between SGCB and SGCG is particularly strong while SGCA is loosely associated with the other sarcoglycans. In terms of processing, disulfide bonds are present.

It is found in the cell membrane. The protein localises to the sarcolemma. Its subcellular location is the cytoplasm. The protein resides in the cytoskeleton. In terms of biological role, component of the sarcoglycan complex, a subcomplex of the dystrophin-glycoprotein complex which forms a link between the F-actin cytoskeleton and the extracellular matrix. The chain is Beta-sarcoglycan (SGCB) from Oryctolagus cuniculus (Rabbit).